The following is a 35-amino-acid chain: Photosystem II reaction center protein T (35 aa).

A helical transmembrane segment spans residues Ala-3–Phe-23.

It belongs to the PsbT family. As to quaternary structure, PSII is composed of 1 copy each of membrane proteins PsbA, PsbB, PsbC, PsbD, PsbE, PsbF, PsbH, PsbI, PsbJ, PsbK, PsbL, PsbM, PsbT, PsbY, PsbZ, Psb30/Ycf12, at least 3 peripheral proteins of the oxygen-evolving complex and a large number of cofactors. It forms dimeric complexes.

It localises to the plastid. The protein localises to the chloroplast thylakoid membrane. Functionally, found at the monomer-monomer interface of the photosystem II (PS II) dimer, plays a role in assembly and dimerization of PSII. PSII is a light-driven water plastoquinone oxidoreductase, using light energy to abstract electrons from H(2)O, generating a proton gradient subsequently used for ATP formation. The polypeptide is Photosystem II reaction center protein T (Pisum sativum (Garden pea)).